We begin with the raw amino-acid sequence, 336 residues long: Alcohol dehydrogenase (336 aa).

Residues cysteine 37, histidine 58, cysteine 89, cysteine 92, cysteine 95, cysteine 103, and cysteine 145 each coordinate Zn(2+).

This sequence belongs to the zinc-containing alcohol dehydrogenase family. The cofactor is Zn(2+).

It catalyses the reaction a primary alcohol + NAD(+) = an aldehyde + NADH + H(+). The enzyme catalyses a secondary alcohol + NAD(+) = a ketone + NADH + H(+). The polypeptide is Alcohol dehydrogenase (adh) (Staphylococcus aureus (strain USA300)).